A 186-amino-acid polypeptide reads, in one-letter code: Tumor necrosis factor alpha-induced protein 8-like protein 2 (186 aa).

The protein belongs to the TNFAIP8 family. TNFAIP8L2 subfamily.

Acts as a negative regulator of innate and adaptive immunity by maintaining immune homeostasis. Negative regulator of Toll-like receptor and T-cell receptor function. Prevents hyperresponsiveness of the immune system and maintains immune homeostasis. Inhibits jun/ap1 and NF-kappa-B activation. Promotes Fas-induced apoptosis. This Salmo salar (Atlantic salmon) protein is Tumor necrosis factor alpha-induced protein 8-like protein 2 (tnfaip8l2).